Reading from the N-terminus, the 86-residue chain is Bacteriocin thailandicin (86 aa).

A cross-link (cyclopeptide (Leu-Trp)) is located at residues 23-86 (LTANLGISSY…KYGAKYSAAW (64 aa)).

The protein localises to the secreted. Cyclopeptide antibiotic with bacteriolytic activity against the Gram-positive bacteria S.aureus and S.thermophilus, and lower activity against the Gram-negative bacteria E.coli and P.aeruginosa. The sequence is that of Bacteriocin thailandicin from Enterococcus thailandicus.